The following is a 197-amino-acid chain: uncharacterized protein (197 aa).

6 consecutive transmembrane segments (helical) span residues Ala11–Ile31, Ile50–Gly70, Ala79–Ala99, Ala108–Met128, Ala136–Leu156, and Thr158–Phe178.

Belongs to the chromate ion transporter (CHR) (TC 2.A.51) family.

It is found in the cell membrane. This is an uncharacterized protein from Bacillus subtilis (strain 168).